Consider the following 254-residue polypeptide: 3-deoxy-manno-octulosonate cytidylyltransferase (254 aa).

Belongs to the KdsB family.

It localises to the cytoplasm. It catalyses the reaction 3-deoxy-alpha-D-manno-oct-2-ulosonate + CTP = CMP-3-deoxy-beta-D-manno-octulosonate + diphosphate. Its pathway is nucleotide-sugar biosynthesis; CMP-3-deoxy-D-manno-octulosonate biosynthesis; CMP-3-deoxy-D-manno-octulosonate from 3-deoxy-D-manno-octulosonate and CTP: step 1/1. The protein operates within bacterial outer membrane biogenesis; lipopolysaccharide biosynthesis. Its function is as follows. Activates KDO (a required 8-carbon sugar) for incorporation into bacterial lipopolysaccharide in Gram-negative bacteria. The sequence is that of 3-deoxy-manno-octulosonate cytidylyltransferase from Pseudomonas fluorescens (strain SBW25).